Here is a 521-residue protein sequence, read N- to C-terminus: Protein TESPA1 (521 aa).

Residue Ser311 is modified to Phosphoserine. Positions Gln331–Gln341 are enriched in polar residues. Disordered stretches follow at residues Gln331–Lys351 and Gln461–Ser521. Basic and acidic residues predominate over residues Gln466 to Arg475. Residues Phe485–Gln498 are compositionally biased toward acidic residues. The span at Ser505 to Gln514 shows a compositional bias: basic residues.

Interacts with PLCG1 and GRB2; the association is increased with prolonged stimulation of the TCR and may facilitate the assembly of the LAT signalosome. Interacts with ITPR1. Also interacts with ITPR3. Interacts with HSPA9. Post-translationally, may be phosphorylated in response to store-operated Ca(+2) entry.

Its subcellular location is the cytoplasm. The protein localises to the endoplasmic reticulum membrane. In terms of biological role, required for the development and maturation of T-cells, its function being essential for the late stages of thymocyte development. Plays a role in T-cell antigen receptor (TCR)-mediated activation of the ERK and NFAT signaling pathways, possibly by serving as a scaffolding protein that promotes the assembly of the LAT signalosome in thymocytes. May play a role in the regulation of inositol 1,4,5-trisphosphate receptor-mediated Ca(2+) release and mitochondrial Ca(2+) uptake via the mitochondria-associated endoplasmic reticulum membrane (MAM) compartment. This is Protein TESPA1 (TESPA1) from Homo sapiens (Human).